The chain runs to 60 residues: Large ribosomal subunit protein bL33 (60 aa).

It belongs to the bacterial ribosomal protein bL33 family.

The polypeptide is Large ribosomal subunit protein bL33 (Christiangramia forsetii (strain DSM 17595 / CGMCC 1.15422 / KT0803) (Gramella forsetii)).